The following is a 249-amino-acid chain: Triosephosphate isomerase (249 aa).

Substrate contacts are provided by Asn10 and Lys12. His94 (electrophile) is an active-site residue. Glu166 functions as the Proton acceptor in the catalytic mechanism.

The protein belongs to the triosephosphate isomerase family. As to quaternary structure, homodimer. The N-terminus is blocked.

The enzyme catalyses D-glyceraldehyde 3-phosphate = dihydroxyacetone phosphate. It participates in carbohydrate biosynthesis; gluconeogenesis. The protein operates within carbohydrate degradation; glycolysis; D-glyceraldehyde 3-phosphate from glycerone phosphate: step 1/1. This chain is Triosephosphate isomerase (TPI1), found in Paracoccidioides lutzii (strain ATCC MYA-826 / Pb01) (Paracoccidioides brasiliensis).